Here is a 446-residue protein sequence, read N- to C-terminus: Citrate/sodium symporter (446 aa).

Over 1-27 (MTNMSQPPATEKKGVSDLLGFKIFGMP) the chain is Cytoplasmic. A helical transmembrane segment spans residues 28–44 (LPLYAFALITLLLSHFY). At 45–50 (NALPTD) the chain is on the periplasmic side. A helical membrane pass occupies residues 51–71 (IVGGFAIMFIIGAIFGEIGKR). Topologically, residues 72-80 (LPIFNKYIG) are cytoplasmic. A helical transmembrane segment spans residues 81–95 (GAPVMIFLVAAYFVY). At 96–115 (AGIFTQKEIDAISNVMDKSN) the chain is on the periplasmic side. Residues 116 to 130 (FLNLFIAVLITGAIL) form a helical membrane-spanning segment. At 131 to 136 (SVNRRL) the chain is on the cytoplasmic side. Residues 137 to 166 (LLKSLLGYIPTILMGIVGASIFGIAIGLVF) form a helical membrane-spanning segment. Over 167–181 (GIPVDRIMMLYVLPI) the chain is Periplasmic. 2 residues coordinate Na(+): I181 and G183. The segment at residues 182–189 (MGGGNGAG) is an intramembrane region (helical). Residues N186 and G187 each contribute to the citrate site. Over 190–212 (AVPLSEIYHSVTGRSREEYYSTA) the chain is Periplasmic. A helical membrane pass occupies residues 213–233 (IAILTIANIFAIVFAAVLDII). The Cytoplasmic segment spans residues 234–264 (GKKHTWLSGEGELVRKASFKVEEDEKTGQIT). A helical membrane pass occupies residues 265 to 287 (HRETAVGLVLSTTCFLLAYVVAK). Topologically, residues 288–299 (KILPSIGGVAIH) are periplasmic. Residues 300–315 (YFAWMVLIVAALNASG) traverse the membrane as a helical segment. Topologically, residues 316-327 (LCSPEIKAGAKR) are cytoplasmic. Residues 328 to 351 (LSDFFSKQLLWVLMVGVGVCYTDL) form a helical membrane-spanning segment. Topologically, residues 352 to 359 (QEIINAIT) are periplasmic. Residues 360 to 381 (FANVVIAAIIVIGAVLGAAIGG) form a helical membrane-spanning segment. Residues 382 to 398 (WLMGFFPIESAITAGLC) lie on the Cytoplasmic side of the membrane. 2 residues coordinate Na(+): M399 and N401. Residues 399–406 (MANRGGSG) constitute an intramembrane region (helical). 3 residues coordinate citrate: R402, G404, and S405. The Cytoplasmic segment spans residues 407-416 (DLEVLSACNR). Residues 417–438 (MNLISYAQISSRLGGGIVLVIA) traverse the membrane as a helical segment. R428 is a binding site for citrate. Residues 439–446 (SIVFGMMI) lie on the Periplasmic side of the membrane.

It belongs to the 2-hydroxycarboxylate transporter (2-HCT) (TC 2.A.24) family. As to quaternary structure, homodimer.

It localises to the cell inner membrane. The enzyme catalyses citrate(out) + 2 Na(+)(out) = citrate(in) + 2 Na(+)(in). Its activity is regulated as follows. In the absence of Na(+), transport is inhibited by the thiol reagents N-ethylmaleimide (NEM) and the methanethiosulfonate (MTS) derivatives MTSEA, MTSET and MTSES. However, inactivation by NEM, MTSES and MTSET is prevented by the presence of Na(+). In the absence of Na(+), the substrate citrate has no effect on the inactivation by permeable or impermeable thiol reagents. In contrast, when subsaturating concentrations of Na(+) are present, citrate significantly reduces inactivation, suggesting ordered binding of the substrate and co-ion; citrate is bound after Na(+). The membrane impermeable bulky maleimide AmdiS does not inactivate the transporter in right-side-out membrane vesicles. The apparent affinity for Na(+) decreases with increasing proton concentration. Protons cannot replace Na(+) in the translocation step but the decrease in apparent affinity for Na(+) towards lower pH suggests that protons can compete with Na(+) for the cation-binding sites. Its function is as follows. Secondary active transporter that catalyzes the uptake of citrate across the membrane with the concomitant uptake of sodium. There are conflicting data regarding exact substrate stoichiometry: the sodium/citrate stoichiometry was predicted to be 1, but the latest studies suggest that CitS transports citrate in symport with 2 sodium ions. Transports citrate as a divalent citrate anion, H-citrate(2-). Shows narrow substrate specificity and is very specific, transporting only citrate and to a low extent citromalate. Symport of Na(+) is absolutely required in the range pH 5-7 because no uptake can be detected in the absence of Na(+). Lithium can replace Na(+) in the symport reaction but it takes about a 200-fold higher concentration of Li(+) over Na(+) to achieve the same rate of uptake. This chain is Citrate/sodium symporter, found in Klebsiella pneumoniae.